The sequence spans 372 residues: Phospho-N-acetylmuramoyl-pentapeptide-transferase (372 aa).

10 helical membrane-spanning segments follow: residues 2–22 (LVWL…VSSL), 71–91 (TPTM…LLWA), 98–118 (VWIL…DDWL), 134–154 (YFWL…IATL), 176–196 (MIPF…YFVI), 211–231 (GLAI…AYVS), 251–271 (VIIV…FNAH), 275–295 (VFMG…IAVM), 300–320 (IAFA…MLQV), and 349–369 (QVVA…LMTL).

It belongs to the glycosyltransferase 4 family. MraY subfamily. It depends on Mg(2+) as a cofactor.

The protein resides in the cell inner membrane. The enzyme catalyses UDP-N-acetyl-alpha-D-muramoyl-L-alanyl-gamma-D-glutamyl-meso-2,6-diaminopimeloyl-D-alanyl-D-alanine + di-trans,octa-cis-undecaprenyl phosphate = di-trans,octa-cis-undecaprenyl diphospho-N-acetyl-alpha-D-muramoyl-L-alanyl-D-glutamyl-meso-2,6-diaminopimeloyl-D-alanyl-D-alanine + UMP. It participates in cell wall biogenesis; peptidoglycan biosynthesis. Its function is as follows. Catalyzes the initial step of the lipid cycle reactions in the biosynthesis of the cell wall peptidoglycan: transfers peptidoglycan precursor phospho-MurNAc-pentapeptide from UDP-MurNAc-pentapeptide onto the lipid carrier undecaprenyl phosphate, yielding undecaprenyl-pyrophosphoryl-MurNAc-pentapeptide, known as lipid I. The chain is Phospho-N-acetylmuramoyl-pentapeptide-transferase from Psychrobacter cryohalolentis (strain ATCC BAA-1226 / DSM 17306 / VKM B-2378 / K5).